Reading from the N-terminus, the 561-residue chain is Transmembrane protein 209 (561 aa).

Serine 11 bears the Phosphoserine mark. The chain crosses the membrane as a helical span at residues 28 to 48; sequence VVLAWGLLNVSMAGMIYTEMT. Residue asparagine 57 is glycosylated (N-linked (GlcNAc...) asparagine). The chain crosses the membrane as a helical span at residues 60–80; it reads YWPLWYIELALASLFSLNALF. Position 98 is a phosphoserine (serine 98). Disordered stretches follow at residues 120 to 156 and 200 to 232; these read LAAT…KFAT and SSPY…PTDK. Residues 138 to 152 are compositionally biased toward low complexity; that stretch reads SVLSYSPSRSPSTSP. 2 positions are modified to phosphoserine: serine 201 and serine 248. The tract at residues 250 to 270 is disordered; sequence EEKQHRVKLGSPDSTSPSTSP. The segment covering 260 to 270 has biased composition (low complexity); the sequence is SPDSTSPSTSP. Asparagine 274 carries an N-linked (GlcNAc...) asparagine glycan. Residue serine 278 is modified to Phosphoserine.

In terms of assembly, interacts with NUP205.

The protein localises to the membrane. It localises to the nucleus envelope. It is found in the golgi apparatus. The protein resides in the cytoplasm. Its function is as follows. Nuclear envelope protein which in association with NUP205, may be involved in nuclear transport of various nuclear proteins in addition to MYC. The sequence is that of Transmembrane protein 209 (Tmem209) from Mus musculus (Mouse).